A 361-amino-acid chain; its full sequence is Phenylalanine--tRNA ligase alpha subunit (361 aa).

Position 260 (E260) interacts with Mg(2+).

The protein belongs to the class-II aminoacyl-tRNA synthetase family. Phe-tRNA synthetase alpha subunit type 1 subfamily. Tetramer of two alpha and two beta subunits. The cofactor is Mg(2+).

It localises to the cytoplasm. The enzyme catalyses tRNA(Phe) + L-phenylalanine + ATP = L-phenylalanyl-tRNA(Phe) + AMP + diphosphate + H(+). This chain is Phenylalanine--tRNA ligase alpha subunit, found in Bartonella quintana (strain Toulouse) (Rochalimaea quintana).